A 355-amino-acid polypeptide reads, in one-letter code: UDP-N-acetylglucosamine--N-acetylmuramyl-(pentapeptide) pyrophosphoryl-undecaprenol N-acetylglucosamine transferase (355 aa).

UDP-N-acetyl-alpha-D-glucosamine is bound by residues 15–17 (TGG), asparagine 127, arginine 163, serine 191, isoleucine 244, 263–268 (ALTVSE), and glutamine 288.

Belongs to the glycosyltransferase 28 family. MurG subfamily.

The protein resides in the cell inner membrane. The enzyme catalyses di-trans,octa-cis-undecaprenyl diphospho-N-acetyl-alpha-D-muramoyl-L-alanyl-D-glutamyl-meso-2,6-diaminopimeloyl-D-alanyl-D-alanine + UDP-N-acetyl-alpha-D-glucosamine = di-trans,octa-cis-undecaprenyl diphospho-[N-acetyl-alpha-D-glucosaminyl-(1-&gt;4)]-N-acetyl-alpha-D-muramoyl-L-alanyl-D-glutamyl-meso-2,6-diaminopimeloyl-D-alanyl-D-alanine + UDP + H(+). It participates in cell wall biogenesis; peptidoglycan biosynthesis. Cell wall formation. Catalyzes the transfer of a GlcNAc subunit on undecaprenyl-pyrophosphoryl-MurNAc-pentapeptide (lipid intermediate I) to form undecaprenyl-pyrophosphoryl-MurNAc-(pentapeptide)GlcNAc (lipid intermediate II). In Sodalis glossinidius (strain morsitans), this protein is UDP-N-acetylglucosamine--N-acetylmuramyl-(pentapeptide) pyrophosphoryl-undecaprenol N-acetylglucosamine transferase.